We begin with the raw amino-acid sequence, 332 residues long: Adenosine receptor A2b (332 aa).

Over 1-8 the chain is Extracellular; sequence MQLETQDA. A helical membrane pass occupies residues 9–33; it reads LYVALELAIAALSVAGNVLVCAAVG. Residues 34–43 are Cytoplasmic-facing; the sequence is TSSALQTPTN. The helical transmembrane segment at 44–67 threads the bilayer; the sequence is YFLVSLAAADVAVGLFAIPFAITI. At 68 to 78 the chain is on the extracellular side; it reads SLGFCTDFHSC. Cysteines 78 and 170 form a disulfide. The helical transmembrane segment at 79–101 threads the bilayer; that stretch reads LFLACFVLVLTQSSIFSLLAVAV. Residues 102–121 lie on the Cytoplasmic side of the membrane; the sequence is DRYLAIRVPLRYKSLVTGTR. The helical transmembrane segment at 122–144 threads the bilayer; the sequence is ARGVIAVLWVLAFGIGLTPFLGW. Topologically, residues 145 to 177 are extracellular; that stretch reads NSKDSATNCTEPWDGTTNESCCLVKCLFENVVP. 2 N-linked (GlcNAc...) asparagine glycosylation sites follow: asparagine 152 and asparagine 162. Glutamate 173 contributes to the adenosine binding site. The helical transmembrane segment at 178 to 202 threads the bilayer; sequence MSYMVYFNFFGCVLPPLLIMLVIYI. Residues 203–234 are Cytoplasmic-facing; it reads KIFMVACKQLQRTELVDHSRTVIQREIHAAKS. The chain crosses the membrane as a helical span at residues 235 to 258; sequence LAMIVGIFALCWLPVHAINCVTLF. Asparagine 253 provides a ligand contact to adenosine. The Extracellular portion of the chain corresponds to 259 to 266; the sequence is QPARAKDK. A helical membrane pass occupies residues 267–290; that stretch reads PKWAMNMAILLSHASSVVNPIVYA. Adenosine is bound by residues serine 278 and histidine 279. At 291-332 the chain is on the cytoplasmic side; the sequence is YRNRDFRYTFHKIISRYVLCQTDVLKSGNGQAGTQSALDVGL. Cysteine 310 carries the S-palmitoyl cysteine lipid modification.

This sequence belongs to the G-protein coupled receptor 1 family.

It localises to the cell membrane. Functionally, receptor for adenosine. The activity of this receptor is mediated by G proteins which activate adenylyl cyclase. This chain is Adenosine receptor A2b (ADORA2B), found in Canis lupus familiaris (Dog).